The chain runs to 186 residues: Secreted chorismate mutase (186 aa).

The signal sequence occupies residues 1–30 (MQPTHTLTRLTVIGKLIIASSFFLSLAVQA). Residues 31 to 107 (QQCGQTAPLI…AAKAIQYRYR (77 aa)) enclose the Chorismate mutase domain. C33 and C148 are joined by a disulfide. Residues R43, K54, D63, 99-103 (AKAIQ), and R127 contribute to the substrate site.

As to quaternary structure, homodimer.

It localises to the periplasm. It carries out the reaction chorismate = prephenate. It functions in the pathway metabolic intermediate biosynthesis; prephenate biosynthesis; prephenate from chorismate: step 1/1. Functionally, catalyzes the Claisen rearrangement of chorismate to prephenate. May play some role in the pathogenicity. This is Secreted chorismate mutase (pheA2) from Yersinia pestis.